The primary structure comprises 518 residues: UPF0288 protein Mbar_A0706 (518 aa).

It belongs to the UPF0288 family.

The protein is UPF0288 protein Mbar_A0706 of Methanosarcina barkeri (strain Fusaro / DSM 804).